Here is a 273-residue protein sequence, read N- to C-terminus: Formamidopyrimidine-DNA glycosylase (273 aa).

Pro-2 (schiff-base intermediate with DNA) is an active-site residue. Residue Glu-3 is the Proton donor of the active site. The active-site Proton donor; for beta-elimination activity is the Lys-58. Residues His-91 and Arg-110 each contribute to the DNA site. The FPG-type zinc finger occupies 238–272 (QVYGKTGQPCPRCASMIVKIKLGGRGTHLCPHCQK). The active-site Proton donor; for delta-elimination activity is Arg-262.

The protein belongs to the FPG family. As to quaternary structure, monomer. The cofactor is Zn(2+).

The catalysed reaction is Hydrolysis of DNA containing ring-opened 7-methylguanine residues, releasing 2,6-diamino-4-hydroxy-5-(N-methyl)formamidopyrimidine.. It carries out the reaction 2'-deoxyribonucleotide-(2'-deoxyribose 5'-phosphate)-2'-deoxyribonucleotide-DNA = a 3'-end 2'-deoxyribonucleotide-(2,3-dehydro-2,3-deoxyribose 5'-phosphate)-DNA + a 5'-end 5'-phospho-2'-deoxyribonucleoside-DNA + H(+). Involved in base excision repair of DNA damaged by oxidation or by mutagenic agents. Acts as a DNA glycosylase that recognizes and removes damaged bases. Has a preference for oxidized purines, such as 7,8-dihydro-8-oxoguanine (8-oxoG). Has AP (apurinic/apyrimidinic) lyase activity and introduces nicks in the DNA strand. Cleaves the DNA backbone by beta-delta elimination to generate a single-strand break at the site of the removed base with both 3'- and 5'-phosphates. The protein is Formamidopyrimidine-DNA glycosylase of Streptococcus thermophilus (strain CNRZ 1066).